Consider the following 174-residue polypeptide: Endoribonuclease YbeY (174 aa).

3 residues coordinate Zn(2+): histidine 129, histidine 133, and histidine 139.

The protein belongs to the endoribonuclease YbeY family. It depends on Zn(2+) as a cofactor.

The protein localises to the cytoplasm. Functionally, single strand-specific metallo-endoribonuclease involved in late-stage 70S ribosome quality control and in maturation of the 3' terminus of the 16S rRNA. This chain is Endoribonuclease YbeY, found in Lactobacillus acidophilus (strain ATCC 700396 / NCK56 / N2 / NCFM).